Consider the following 149-residue polypeptide: Large ribosomal subunit protein uL15 (149 aa).

2 stretches are compositionally biased toward basic residues: residues 1 to 14 (MPTH…HRGH) and 21 to 30 (RVGKHRKHPG). Residues 1–42 (MPTHLSKTRKHRGHVSAGHGRVGKHRKHPGGRGLAGGQHHHR) are disordered.

Belongs to the universal ribosomal protein uL15 family.

This chain is Large ribosomal subunit protein uL15, found in Blumeria hordei (Barley powdery mildew).